A 295-amino-acid chain; its full sequence is Diaminopimelate epimerase (295 aa).

Asn-13, Gln-46, and Asn-66 together coordinate substrate. Cys-75 (proton donor) is an active-site residue. Substrate-binding positions include 76–77, Asn-162, Asn-195, and 213–214; these read GN and ER. The Proton acceptor role is filled by Cys-222. 223-224 provides a ligand contact to substrate; sequence GT.

It belongs to the diaminopimelate epimerase family. As to quaternary structure, homodimer.

It localises to the cytoplasm. The enzyme catalyses (2S,6S)-2,6-diaminopimelate = meso-2,6-diaminopimelate. It participates in amino-acid biosynthesis; L-lysine biosynthesis via DAP pathway; DL-2,6-diaminopimelate from LL-2,6-diaminopimelate: step 1/1. Its function is as follows. Catalyzes the stereoinversion of LL-2,6-diaminopimelate (L,L-DAP) to meso-diaminopimelate (meso-DAP), a precursor of L-lysine and an essential component of the bacterial peptidoglycan. The chain is Diaminopimelate epimerase from Psychrobacter cryohalolentis (strain ATCC BAA-1226 / DSM 17306 / VKM B-2378 / K5).